The following is a 280-amino-acid chain: uncharacterized protein (280 aa).

Belongs to the metallo-dependent hydrolases superfamily.

This is an uncharacterized protein from Methanocaldococcus jannaschii (strain ATCC 43067 / DSM 2661 / JAL-1 / JCM 10045 / NBRC 100440) (Methanococcus jannaschii).